A 385-amino-acid polypeptide reads, in one-letter code: FK506-binding protein 5 (385 aa).

A PPIase FKBP-type domain is found at 26 to 115 (TNFVSVHYDA…RFEVELIGFW (90 aa)). TPR repeat units lie at residues 128–161 (AEKK…IQDL), 177–210 (VSIQ…DMTK), and 211–244 (IKAY…AIGL).

It carries out the reaction [protein]-peptidylproline (omega=180) = [protein]-peptidylproline (omega=0). Inhibited by both FK506 and rapamycin. Its function is as follows. PPIases accelerate the folding of proteins. It catalyzes the cis-trans isomerization of proline imidic peptide bonds in oligopeptides. The sequence is that of FK506-binding protein 5 (FKBP5) from Rhizopus delemar (strain RA 99-880 / ATCC MYA-4621 / FGSC 9543 / NRRL 43880) (Mucormycosis agent).